The sequence spans 336 residues: F420-dependent glucose-6-phosphate dehydrogenase (336 aa).

A coenzyme F420-(gamma-Glu)n-binding site is contributed by D39. H40 acts as the Proton donor in catalysis. Residues T76 and 107-108 (TG) contribute to the coenzyme F420-(gamma-Glu)n site. The active-site Proton acceptor is the E109. Coenzyme F420-(gamma-Glu)n-binding positions include N112, 177–178 (GG), and 180–181 (EV). Residues T195, K198, K259, and R283 each coordinate substrate.

The protein belongs to the F420-dependent glucose-6-phosphate dehydrogenase family. In terms of assembly, homodimer.

The catalysed reaction is oxidized coenzyme F420-(gamma-L-Glu)(n) + D-glucose 6-phosphate + H(+) = 6-phospho-D-glucono-1,5-lactone + reduced coenzyme F420-(gamma-L-Glu)(n). In terms of biological role, catalyzes the coenzyme F420-dependent oxidation of glucose 6-phosphate (G6P) to 6-phosphogluconolactone. Appears to have a role in resistance to oxidative stress, via its consumption of G6P that serves as a source of reducing power to combat oxidative stress in mycobacteria. The sequence is that of F420-dependent glucose-6-phosphate dehydrogenase from Mycobacterium leprae (strain Br4923).